Reading from the N-terminus, the 561-residue chain is Arginine--tRNA ligase (561 aa).

The 'HIGH' region motif lies at Ala129–His139.

It belongs to the class-I aminoacyl-tRNA synthetase family. In terms of assembly, monomer.

It is found in the cytoplasm. It catalyses the reaction tRNA(Arg) + L-arginine + ATP = L-arginyl-tRNA(Arg) + AMP + diphosphate. The chain is Arginine--tRNA ligase from Polaromonas sp. (strain JS666 / ATCC BAA-500).